Here is a 143-residue protein sequence, read N- to C-terminus: MRVLVQRVCSAAVTVDGDVVGAVRPPGQGLLAFVGVTHGDDGDKARRLAEKLWYLRILTDEKSASDLGAPILVVSQFTLYADTVKGRRPSWNAAAPRAVAEPLVAAFAEALRALGAHVEAGVFGAHMQVELINDGPVTVMLEL.

Residues Gly-135–Pro-136 carry the Gly-cisPro motif, important for rejection of L-amino acids motif.

This sequence belongs to the DTD family. Homodimer.

Its subcellular location is the cytoplasm. It catalyses the reaction glycyl-tRNA(Ala) + H2O = tRNA(Ala) + glycine + H(+). The catalysed reaction is a D-aminoacyl-tRNA + H2O = a tRNA + a D-alpha-amino acid + H(+). An aminoacyl-tRNA editing enzyme that deacylates mischarged D-aminoacyl-tRNAs. Also deacylates mischarged glycyl-tRNA(Ala), protecting cells against glycine mischarging by AlaRS. Acts via tRNA-based rather than protein-based catalysis; rejects L-amino acids rather than detecting D-amino acids in the active site. By recycling D-aminoacyl-tRNA to D-amino acids and free tRNA molecules, this enzyme counteracts the toxicity associated with the formation of D-aminoacyl-tRNA entities in vivo and helps enforce protein L-homochirality. The chain is D-aminoacyl-tRNA deacylase from Mycobacterium marinum (strain ATCC BAA-535 / M).